A 272-amino-acid polypeptide reads, in one-letter code: NAD kinase (272 aa).

Aspartate 62 acts as the Proton acceptor in catalysis. NAD(+) is bound by residues 62 to 63 (DG), arginine 67, 129 to 130 (NE), arginine 140, lysine 157, aspartate 159, isoleucine 167, 170 to 175 (SSYSSS), alanine 194, and glutamine 229.

Belongs to the NAD kinase family. A divalent metal cation is required as a cofactor.

The protein localises to the cytoplasm. It catalyses the reaction NAD(+) + ATP = ADP + NADP(+) + H(+). In terms of biological role, involved in the regulation of the intracellular balance of NAD and NADP, and is a key enzyme in the biosynthesis of NADP. Catalyzes specifically the phosphorylation on 2'-hydroxyl of the adenosine moiety of NAD to yield NADP. This is NAD kinase from Thermoplasma acidophilum (strain ATCC 25905 / DSM 1728 / JCM 9062 / NBRC 15155 / AMRC-C165).